The sequence spans 558 residues: Formate--tetrahydrofolate ligase (558 aa).

Residue threonine 66–threonine 73 participates in ATP binding.

Belongs to the formate--tetrahydrofolate ligase family.

The enzyme catalyses (6S)-5,6,7,8-tetrahydrofolate + formate + ATP = (6R)-10-formyltetrahydrofolate + ADP + phosphate. It participates in one-carbon metabolism; tetrahydrofolate interconversion. The chain is Formate--tetrahydrofolate ligase from Clostridium kluyveri (strain NBRC 12016).